The sequence spans 489 residues: Leukocyte immunoglobulin-like receptor subfamily A member 1 (489 aa).

The signal sequence occupies residues 1–16 (MTPIVTVLICLRLSLG). The Extracellular portion of the chain corresponds to 17–461 (PRTHVQAGTL…SHPQDYTVEN (445 aa)). Ig-like C2-type domains follow at residues 27-116 (PKPT…PLEL), 119-224 (TGAY…GVSK), 226-315 (PSLS…DPLD), and 326-415 (PFIS…SDSL). A disulfide bridge connects residues C49 and C98. N-linked (GlcNAc...) asparagine glycosylation occurs at N140. 3 cysteine pairs are disulfide-bonded: C145–C197, C157–C167, and C246–C297. N281, N302, and N341 each carry an N-linked (GlcNAc...) asparagine glycan. C346 and C397 are oxidised to a cystine. The segment at 425–453 (TLSPPQNKSDSKAGAANTLSPSQNKTASH) is disordered. N431 and N448 each carry an N-linked (GlcNAc...) asparagine glycan. Over residues 441–453 (NTLSPSQNKTASH) the composition is skewed to polar residues. The helical transmembrane segment at 462–482 (LIRMGIAGLVLVVLGILLFEA) threads the bilayer. The Cytoplasmic portion of the chain corresponds to 483-489 (QHSQRSL).

Detected in monocytes and B-cells.

Its subcellular location is the membrane. In terms of biological role, may act as receptor for class I MHC antigens. The protein is Leukocyte immunoglobulin-like receptor subfamily A member 1 (LILRA1) of Homo sapiens (Human).